The primary structure comprises 168 residues: tRNA-splicing endonuclease (168 aa).

Active-site residues include Tyr-107, His-114, and Lys-145.

This sequence belongs to the tRNA-intron endonuclease family. Archaeal short subfamily. Homotetramer; although the tetramer contains four active sites, only two participate in the cleavage. Therefore, it should be considered as a dimer of dimers.

The catalysed reaction is pretRNA = a 3'-half-tRNA molecule with a 5'-OH end + a 5'-half-tRNA molecule with a 2',3'-cyclic phosphate end + an intron with a 2',3'-cyclic phosphate and a 5'-hydroxyl terminus.. Its function is as follows. Endonuclease that removes tRNA introns. Cleaves pre-tRNA at the 5'- and 3'-splice sites to release the intron. The products are an intron and two tRNA half-molecules bearing 2',3' cyclic phosphate and 5'-OH termini. Recognizes a pseudosymmetric substrate in which 2 bulged loops of 3 bases are separated by a stem of 4 bp. The protein is tRNA-splicing endonuclease of Thermococcus gammatolerans (strain DSM 15229 / JCM 11827 / EJ3).